The primary structure comprises 322 residues: tRNA dimethylallyltransferase (322 aa).

18–25 (GPTASGKS) serves as a coordination point for ATP. 20–25 (TASGKS) contributes to the substrate binding site. Interaction with substrate tRNA stretches follow at residues 43 to 46 (DSRQ) and 167 to 171 (QRLVR).

This sequence belongs to the IPP transferase family. As to quaternary structure, monomer. Mg(2+) serves as cofactor.

It carries out the reaction adenosine(37) in tRNA + dimethylallyl diphosphate = N(6)-dimethylallyladenosine(37) in tRNA + diphosphate. Its function is as follows. Catalyzes the transfer of a dimethylallyl group onto the adenine at position 37 in tRNAs that read codons beginning with uridine, leading to the formation of N6-(dimethylallyl)adenosine (i(6)A). The polypeptide is tRNA dimethylallyltransferase (Chlorobium phaeobacteroides (strain BS1)).